We begin with the raw amino-acid sequence, 594 residues long: UvrABC system protein C (594 aa).

The GIY-YIG domain maps to 13 to 99 (SSSGVYQYFD…IKQLKPKYNI (87 aa)). A UVR domain is found at 205 to 240 (DRLIKELELKMERLSSNLRFEEALIYRDRIAKIQKI).

Belongs to the UvrC family. In terms of assembly, interacts with UvrB in an incision complex.

It localises to the cytoplasm. Its function is as follows. The UvrABC repair system catalyzes the recognition and processing of DNA lesions. UvrC both incises the 5' and 3' sides of the lesion. The N-terminal half is responsible for the 3' incision and the C-terminal half is responsible for the 5' incision. This chain is UvrABC system protein C, found in Helicobacter pylori (strain J99 / ATCC 700824) (Campylobacter pylori J99).